The following is a 314-amino-acid chain: Hydroxyacyl-coenzyme A dehydrogenase, mitochondrial (314 aa).

Residues 1–12 (MAFATRQLVRSL) constitute a mitochondrion transit peptide. NAD(+) contacts are provided by residues 34–39 (GGGLMG) and aspartate 57. Serine 73 and lysine 80 together coordinate CoA. The residue at position 80 (lysine 80) is an N6-succinyllysine. N6-acetyllysine; alternate is present on residues lysine 81 and lysine 87. Lysine 81 and lysine 87 each carry N6-succinyllysine; alternate. Glutamate 122 provides a ligand contact to NAD(+). Lysine 125 carries the N6-acetyllysine modification. Lysine 127 provides a ligand contact to NAD(+). Lysine 127 carries the N6-(2-hydroxyisobutyryl)lysine modification. Lysine 136 carries the N6-acetyllysine; alternate modification. The residue at position 136 (lysine 136) is an N6-succinyllysine; alternate. NAD(+) is bound by residues serine 149 and asparagine 173. Residue serine 149 participates in CoA binding. Lysine 179 carries the post-translational modification N6-acetyllysine. Residues lysine 185, lysine 192, and lysine 202 each carry the N6-acetyllysine; alternate modification. An N6-succinyllysine; alternate mark is found at lysine 185, lysine 192, and lysine 202. Residue lysine 206 is modified to N6-succinyllysine. N6-acetyllysine; alternate is present on residues lysine 212 and lysine 241. Lysine 212 and lysine 241 each carry N6-succinyllysine; alternate. Position 305 (lysine 305) interacts with NAD(+). Lysine 312 is modified (N6-acetyllysine; alternate). Lysine 312 carries the post-translational modification N6-succinyllysine; alternate.

It belongs to the 3-hydroxyacyl-CoA dehydrogenase family. Homodimer. Interacts with GLUD1; this interaction inhibits the activation of glutamate dehydrogenase 1 (GLUD1). In terms of processing, succinylation at Lys-81, adjacent to a coenzyme A binding site. Desuccinylated by SIRT5.

The protein localises to the mitochondrion matrix. It carries out the reaction a (3S)-3-hydroxyacyl-CoA + NAD(+) = a 3-oxoacyl-CoA + NADH + H(+). The catalysed reaction is (3S)-3-hydroxybutanoyl-CoA + NAD(+) = acetoacetyl-CoA + NADH + H(+). The enzyme catalyses (3S)-hydroxydecanoyl-CoA + NAD(+) = 3-oxodecanoyl-CoA + NADH + H(+). It catalyses the reaction (3S)-hydroxyhexadecanoyl-CoA + NAD(+) = 3-oxohexadecanoyl-CoA + NADH + H(+). The protein operates within lipid metabolism; fatty acid beta-oxidation. In terms of biological role, mitochondrial fatty acid beta-oxidation enzyme that catalyzes the third step of the beta-oxidation cycle for medium and short-chain 3-hydroxy fatty acyl-CoAs (C4 to C10). Plays a role in the control of insulin secretion by inhibiting the activation of glutamate dehydrogenase 1 (GLUD1), an enzyme that has an important role in regulating amino acid-induced insulin secretion. Plays a role in the maintenance of normal spermatogenesis through the reduction of fatty acid accumulation in the testes. In Sus scrofa (Pig), this protein is Hydroxyacyl-coenzyme A dehydrogenase, mitochondrial (HADH).